The following is a 166-amino-acid chain: Tegument protein UL55 homolog (166 aa).

This sequence belongs to the alphaherpesvirinae HHV-1 UL55 family.

The protein localises to the virion tegument. Its subcellular location is the host nucleus matrix. This Gallid herpesvirus 2 (strain Chicken/Md5/ATCC VR-987) (GaHV-2) protein is Tegument protein UL55 homolog (MDV070).